Here is a 298-residue protein sequence, read N- to C-terminus: ATP phosphoribosyltransferase (298 aa).

The protein belongs to the ATP phosphoribosyltransferase family. Long subfamily. Mg(2+) is required as a cofactor.

Its subcellular location is the cytoplasm. The enzyme catalyses 1-(5-phospho-beta-D-ribosyl)-ATP + diphosphate = 5-phospho-alpha-D-ribose 1-diphosphate + ATP. The protein operates within amino-acid biosynthesis; L-histidine biosynthesis; L-histidine from 5-phospho-alpha-D-ribose 1-diphosphate: step 1/9. Feedback inhibited by histidine. Catalyzes the condensation of ATP and 5-phosphoribose 1-diphosphate to form N'-(5'-phosphoribosyl)-ATP (PR-ATP). Has a crucial role in the pathway because the rate of histidine biosynthesis seems to be controlled primarily by regulation of HisG enzymatic activity. This chain is ATP phosphoribosyltransferase, found in Aliivibrio fischeri (strain ATCC 700601 / ES114) (Vibrio fischeri).